We begin with the raw amino-acid sequence, 118 residues long: Basic phospholipase A2 PA-13 (118 aa).

Cystine bridges form between Cys11-Cys71, Cys27-Cys117, Cys29-Cys45, Cys44-Cys98, Cys51-Cys91, Cys60-Cys84, and Cys78-Cys89. 3 residues coordinate Ca(2+): Tyr28, Gly30, and Gly32. His48 is an active-site residue. Asp49 serves as a coordination point for Ca(2+). Asp92 is a catalytic residue.

This sequence belongs to the phospholipase A2 family. Group I subfamily. D49 sub-subfamily. Requires Ca(2+) as cofactor. Expressed by the venom gland.

The protein resides in the secreted. It catalyses the reaction a 1,2-diacyl-sn-glycero-3-phosphocholine + H2O = a 1-acyl-sn-glycero-3-phosphocholine + a fatty acid + H(+). Its function is as follows. PLA2 catalyzes the calcium-dependent hydrolysis of the 2-acyl groups in 3-sn-phosphoglycerides. This is Basic phospholipase A2 PA-13 from Pseudechis australis (Mulga snake).